Reading from the N-terminus, the 244-residue chain is rRNA adenine N-6-methyltransferase (244 aa).

The S-adenosyl-L-methionine site is built by N11, I13, G38, E59, D84, and N101.

This sequence belongs to the class I-like SAM-binding methyltransferase superfamily. rRNA adenine N(6)-methyltransferase family.

It carries out the reaction adenosine(2085) in 23S rRNA + 2 S-adenosyl-L-methionine = N(6)-dimethyladenosine(2085) in 23S rRNA + 2 S-adenosyl-L-homocysteine + 2 H(+). Functionally, this protein produces a dimethylation of the adenine residue at position 2085 in 23S rRNA, resulting in reduced affinity between ribosomes and macrolide-lincosamide-streptogramin B antibiotics. The sequence is that of rRNA adenine N-6-methyltransferase (ermM) from Staphylococcus epidermidis.